The following is a 661-amino-acid chain: Probable potassium transport system protein Kup 1 (661 aa).

The segment covering 1–11 has biased composition (gly residues); the sequence is MKGLFPAGGGN. The segment at 1 to 38 is disordered; sequence MKGLFPAGGGNPPSSYLSRFLPHRKERSPENVTSGRNG. 12 helical membrane passes run 48-68, 85-105, 139-159, 177-197, 207-227, 251-271, 286-306, 324-344, 384-404, 405-425, 436-456, and 458-478; these read LALG…LYTI, IMGV…IKYI, AVVV…GFIT, AAKN…FLVQ, IFGP…LLCI, VHGL…EALY, WFAM…AALL, LLLP…QAMI, LMMV…GLAG, AYGV…FFVA, TAPL…SNLL, and FFDG…VMAS.

It belongs to the HAK/KUP transporter (TC 2.A.72) family.

It is found in the cell inner membrane. The enzyme catalyses K(+)(in) + H(+)(in) = K(+)(out) + H(+)(out). In terms of biological role, transport of potassium into the cell. Likely operates as a K(+):H(+) symporter. The sequence is that of Probable potassium transport system protein Kup 1 from Syntrophobacter fumaroxidans (strain DSM 10017 / MPOB).